The following is an 841-amino-acid chain: Rhomboid-like protease 5 (841 aa).

Over residues 1–10 (MSSKGGSSRL) the composition is skewed to low complexity. The tract at residues 1–289 (MSSKGGSSRL…GGDGGPRRHS (289 aa)) is disordered. Residues 11–51 (GSKDLKKMTSRTERELRDSGRVRGEVERVEKRLRATAKVKE) show a composition bias toward basic and acidic residues. A compositionally biased stretch (low complexity) spans 95–132 (LRPASSSPRLASSSRPTESTLPSSSSRALQGASSSSSS). Composition is skewed to basic and acidic residues over residues 154–163 (LRQEKKRLPE), 209–230 (RTAE…RGSV), and 243–275 (SSHE…RSGD). Transmembrane regions (helical) follow at residues 323 to 343 (FLMI…ELVL), 464 to 484 (MFRV…LLNV), 492 to 512 (WILE…VGGV), 526 to 546 (VTVG…PFSI), 571 to 590 (FGNM…GGLI), and 673 to 693 (FAAA…LLVP). Catalysis depends on serine 531, which acts as the Nucleophile. The active site involves histidine 585.

This sequence belongs to the peptidase S54 family.

It is found in the membrane. It carries out the reaction Cleaves type-1 transmembrane domains using a catalytic dyad composed of serine and histidine that are contributed by different transmembrane domains.. Functionally, serine protease involved in intramembrane proteolysis. Cleaves microneme adhesins, such as MIC2. This step is essential for efficient invasion of host cells. Catalyzes intramembrane proteolysis of AMA1. The polypeptide is Rhomboid-like protease 5 (ROM5) (Toxoplasma gondii).